The primary structure comprises 200 residues: NAD(P)H dehydrogenase (quinone) (200 aa).

The Flavodoxin-like domain maps to isoleucine 4–valine 191. FMN-binding positions include serine 10–valine 15 and threonine 79–phenylalanine 81. Tryptophan 12 lines the NAD(+) pocket. Tryptophan 99 provides a ligand contact to substrate. Residues serine 114–glycine 120 and histidine 135 each bind FMN.

Belongs to the WrbA family. FMN is required as a cofactor.

It carries out the reaction a quinone + NADH + H(+) = a quinol + NAD(+). It catalyses the reaction a quinone + NADPH + H(+) = a quinol + NADP(+). The chain is NAD(P)H dehydrogenase (quinone) from Acidithiobacillus ferrooxidans (strain ATCC 53993 / BNL-5-31) (Leptospirillum ferrooxidans (ATCC 53993)).